Reading from the N-terminus, the 591-residue chain is Guanylate-binding protein 2 (591 aa).

Positions methionine 1–cysteine 309 are GTPase domain (Globular). Residues threonine 35 to asparagine 276 form the GB1/RHD3-type G domain. GTP contacts are provided by residues glycine 45–serine 52, arginine 181–aspartate 182, and leucine 245. Cysteine methyl ester is present on cysteine 588. Cysteine 588 is lipidated: S-geranylgeranyl cysteine. Positions asparagine 589–leucine 591 are cleaved as a propeptide — removed in mature form.

This sequence belongs to the TRAFAC class dynamin-like GTPase superfamily. GB1/RHD3 GTPase family. GB1 subfamily. Homodimer; homodimerization occurs upon GTP-binding and is required for the association with membranous structures. Heterodimer with other family members, including GBP1, GBP3, GBP4 and GBP5. (Microbial infection) Ubiquitinated by S.flexneri IpaH9.8, leading to its degradation by the proteasome, thereby preventing its ability to promote host defense against bacterial infection. Post-translationally, isoprenylation is required for proper subcellular location.

The protein localises to the cytoplasmic vesicle membrane. It is found in the golgi apparatus membrane. Its subcellular location is the cytoplasm. It localises to the perinuclear region. It catalyses the reaction GTP + H2O = GDP + phosphate + H(+). Functionally, interferon (IFN)-inducible GTPase that plays important roles in innate immunity against a diverse range of bacterial, viral and protozoan pathogens. Hydrolyzes GTP to GMP in 2 consecutive cleavage reactions, but the major reaction product is GDP. Following infection, recruited to the pathogen-containing vacuoles or vacuole-escaped bacteria and acts as a positive regulator of inflammasome assembly by promoting the release of inflammasome ligands from bacteria. Acts by promoting lysis of pathogen-containing vacuoles, releasing pathogens into the cytosol. Following pathogen release in the cytosol, promotes recruitment of proteins that mediate bacterial cytolysis: this liberates ligands that are detected by inflammasomes, such as lipopolysaccharide (LPS) that activates the non-canonical CASP4/CASP11 inflammasome or double-stranded DNA (dsDNA) that activates the AIM2 inflammasome. Confers protection to the protozoan pathogen Toxoplasma gondii. Independently of its GTPase activity, acts as an inhibitor of various viruses infectivity, such as HIV-1, Zika and influenza A viruses, by inhibiting FURIN-mediated maturation of viral envelope proteins. The polypeptide is Guanylate-binding protein 2 (Homo sapiens (Human)).